The chain runs to 592 residues: Pectinesterase/pectinesterase inhibitor 3 (592 aa).

The signal sequence occupies residues 1 to 35 (MAPSMKEIFSKDNFKKNKKLVLLSAAVALLFVAAV). The propeptide at 36–238 (AGISAGASKA…KITSNNRKLK (203 aa)) is removed in mature 42 kDa form. Residues 36-273 (AGISAGASKA…WLSAGDRRLL (238 aa)) constitute a propeptide, removed in mature 38 kDa form. The tract at residues 53–212 (PSSHAVLRSS…EHMCSNALAM (160 aa)) is pectinesterase inhibitor 3. Asn96 and Asn215 each carry an N-linked (GlcNAc...) asparagine glycan. The tract at residues 281-578 (DATVAADGSG…YTAGQFIGGG (298 aa)) is pectinesterase 3. Thr356 and Gln386 together coordinate substrate. Asp409 (proton donor; for pectinesterase activity) is an active-site residue. A disulfide bridge connects residues Cys423 and Cys443. Asp430 acts as the Nucleophile; for pectinesterase activity in catalysis. Gln454, Arg498, and Trp500 together coordinate substrate.

It in the N-terminal section; belongs to the PMEI family. The protein in the C-terminal section; belongs to the pectinesterase family. In terms of assembly, interacts with BIIDXI and At5g11420. Binds reversibly to PMEI4, PMEI7 and PMEI8 to be inhibited; the stability of the PME3-PMEIs complexes and the inhibition of the pectin methylesterase (PME) activity is pH-dependent, based on protonation status of amino-acids at the complex interface. As to expression, expressed in roots, cotyledons, hypocotyls, seedlings, leaves, stems, flowers, dry seeds and siliques. Accumulates in etiolated hypocotyls (at protein level).

It localises to the secreted. The protein localises to the extracellular space. It is found in the apoplast. Its subcellular location is the cell wall. It catalyses the reaction [(1-&gt;4)-alpha-D-galacturonosyl methyl ester](n) + n H2O = [(1-&gt;4)-alpha-D-galacturonosyl](n) + n methanol + n H(+). Its pathway is glycan metabolism; pectin degradation; 2-dehydro-3-deoxy-D-gluconate from pectin: step 1/5. With respect to regulation, regulated negatively by pectinesterase inhibitors (e.g. PMEI3, PMEI4, PMEI7 and PMEI9) in a pH-dependent manner, mainly in slightly acidic conditions (pH 6.0 and 5.0), especially in dark-grown hypocotyls; this processus relies on changes in the protonation of amino acids involved in intermolecular and intramolecular interactions. Acts in the modification of cell walls via demethylesterification of cell wall pectin. Required for zinc Zn(2+) homeostasis and to monitor Zn(2+) influence on cell wall-controlled growth processes such as root cell elongation. Monitors seed germination and favors root hairs production. Prevents cruciferin seed storage proteins activity, but promotes the expression of genes involved in cell wall organization and remodeling as well as genes involved in lipid and protein metabolism, during post-germinative growth of seedlings. Confers sensitivity to Zn(2+) when overexpressed. Acts as a susceptibility factor required for the initial colonization of the host tissue by virulent pathogens including Botrytis cinerea and Pectobacterium carotovorum, probably by facilitating cell wall pectine degradation by pathogen pectic enzymes after its demethylesterification. This is Pectinesterase/pectinesterase inhibitor 3 from Arabidopsis thaliana (Mouse-ear cress).